Reading from the N-terminus, the 360-residue chain is Peptide chain release factor 1 (360 aa).

An N5-methylglutamine modification is found at glutamine 235. Residues 291–308 (ASERRNLLGTGDRSDRNR) show a composition bias toward basic and acidic residues. The disordered stretch occupies residues 291–312 (ASERRNLLGTGDRSDRNRTYNF).

It belongs to the prokaryotic/mitochondrial release factor family. Methylated by PrmC. Methylation increases the termination efficiency of RF1.

It localises to the cytoplasm. Functionally, peptide chain release factor 1 directs the termination of translation in response to the peptide chain termination codons UAG and UAA. The chain is Peptide chain release factor 1 from Yersinia pseudotuberculosis serotype O:1b (strain IP 31758).